The sequence spans 549 residues: Glucose-6-phosphate isomerase (549 aa).

Residues Lys80, Lys228, and Lys234 each carry the N6-acetyllysine modification. Glu355 functions as the Proton donor in the catalytic mechanism. Residues His386 and Lys514 contribute to the active site.

It belongs to the GPI family.

The protein resides in the cytoplasm. It carries out the reaction alpha-D-glucose 6-phosphate = beta-D-fructose 6-phosphate. It functions in the pathway carbohydrate biosynthesis; gluconeogenesis. The protein operates within carbohydrate degradation; glycolysis; D-glyceraldehyde 3-phosphate and glycerone phosphate from D-glucose: step 2/4. Functionally, catalyzes the reversible isomerization of glucose-6-phosphate to fructose-6-phosphate. The sequence is that of Glucose-6-phosphate isomerase from Escherichia fergusonii (strain ATCC 35469 / DSM 13698 / CCUG 18766 / IAM 14443 / JCM 21226 / LMG 7866 / NBRC 102419 / NCTC 12128 / CDC 0568-73).